We begin with the raw amino-acid sequence, 235 residues long: Elongation factor Tu, chloroplastic (235 aa).

The tr-type G domain occupies 1–125 (KNMITGAAQM…AVDSYIPTPE (125 aa)). 47–50 (NKED) is a binding site for GTP.

This sequence belongs to the TRAFAC class translation factor GTPase superfamily. Classic translation factor GTPase family. EF-Tu/EF-1A subfamily.

The protein resides in the plastid. Its subcellular location is the chloroplast. It carries out the reaction GTP + H2O = GDP + phosphate + H(+). GTP hydrolase that promotes the GTP-dependent binding of aminoacyl-tRNA to the A-site of ribosomes during protein biosynthesis. This Mantoniella squamata (Unicellular alga) protein is Elongation factor Tu, chloroplastic (tufA).